Reading from the N-terminus, the 132-residue chain is L-ectoine synthase (132 aa).

The protein belongs to the ectoine synthase family.

The catalysed reaction is (2S)-4-acetamido-2-aminobutanoate = L-ectoine + H2O. The protein operates within amine and polyamine biosynthesis; ectoine biosynthesis; L-ectoine from L-aspartate 4-semialdehyde: step 3/3. In terms of biological role, catalyzes the circularization of gamma-N-acetyl-alpha,gamma-diaminobutyric acid (ADABA) to ectoine (1,4,5,6-tetrahydro-2-methyl-4-pyrimidine carboxylic acid), which is an excellent osmoprotectant. The sequence is that of L-ectoine synthase from Hahella chejuensis (strain KCTC 2396).